An 89-amino-acid chain; its full sequence is Small ribosomal subunit protein uS15 (89 aa).

It belongs to the universal ribosomal protein uS15 family. As to quaternary structure, part of the 30S ribosomal subunit. Forms a bridge to the 50S subunit in the 70S ribosome, contacting the 23S rRNA.

In terms of biological role, one of the primary rRNA binding proteins, it binds directly to 16S rRNA where it helps nucleate assembly of the platform of the 30S subunit by binding and bridging several RNA helices of the 16S rRNA. Its function is as follows. Forms an intersubunit bridge (bridge B4) with the 23S rRNA of the 50S subunit in the ribosome. The protein is Small ribosomal subunit protein uS15 of Frankia casuarinae (strain DSM 45818 / CECT 9043 / HFP020203 / CcI3).